The following is a 404-amino-acid chain: Glucose-1-phosphate adenylyltransferase 2 (404 aa).

Alpha-D-glucose 1-phosphate is bound by residues Tyr97, Gly162, 177–178 (EK), and Ser195.

It belongs to the bacterial/plant glucose-1-phosphate adenylyltransferase family. As to quaternary structure, homotetramer.

It carries out the reaction alpha-D-glucose 1-phosphate + ATP + H(+) = ADP-alpha-D-glucose + diphosphate. The protein operates within glycan biosynthesis; glycogen biosynthesis. Its function is as follows. Involved in the biosynthesis of ADP-glucose, a building block required for the elongation reactions to produce glycogen. Catalyzes the reaction between ATP and alpha-D-glucose 1-phosphate (G1P) to produce pyrophosphate and ADP-Glc. The sequence is that of Glucose-1-phosphate adenylyltransferase 2 from Vibrio vulnificus (strain YJ016).